A 1273-amino-acid chain; its full sequence is Paired amphipathic helix protein Sin3a (1273 aa).

2 disordered regions span residues 1–23 (MKRRLDDQESPVYAAQQRRIPGS) and 87–110 (HPTAVQPHGGQVVQSHAHPAPPVA). S10 is modified (phosphoserine). One can recognise a PAH 1 domain in the interval 119-189 (QRLKVEDALS…MGFNTFLPPG (71 aa)). Residues 119 to 196 (QRLKVEDALS…PPGYKIEVQT (78 aa)) are interaction with HCFC1. Residues K122 and K134 each participate in a glycyl lysine isopeptide (Lys-Gly) (interchain with G-Cter in SUMO2) cross-link. The segment at 205 to 297 (PGQVHQIPTH…ISLGTAPSLQ (93 aa)) is disordered. The interval 205–480 (PGQVHQIPTH…RKALRSAEAY (276 aa)) is interaction with REST. Positions 228-237 (SQPSAQSAPA) are enriched in low complexity. Pro residues predominate over residues 238 to 248 (PAQPAPQPPPA). The span at 252–266 (KPSQLQAHTPASQQT) shows a compositional bias: polar residues. Residues 267–282 (PPLPPYASPRSPPVQP) are compositionally biased toward pro residues. S277 carries the phosphoserine modification. T284 bears the Phosphothreonine mark. Polar residues predominate over residues 284-297 (TPVTISLGTAPSLQ). Residues 300-383 (QPVEFNHAIN…SEFGQFLPDA (84 aa)) enclose the PAH 2 domain. Positions 398 to 446 (DSVRNDHGGTVKKPQLNNKPQRPSQNGCQIRRHPTGTTPPVKKKPKLLN) are disordered. A compositionally biased stretch (polar residues) spans 412-425 (QLNNKPQRPSQNGC). In terms of domain architecture, PAH 3 spans 456 to 525 (SKHGGGTESL…NWFKNFLGYK (70 aa)). Residues 458–525 (HGGGTESLFF…NWFKNFLGYK (68 aa)) are interaction with SAP30. Residue K469 is modified to N6-acetyllysine. The interval 523-850 (GYKESVHLET…EMDVDEATGA (328 aa)) is interaction with NCOR1. Residues 524–659 (YKESVHLETY…KFRLDNTLGG (136 aa)) are interaction with SUDS3 and SAP130. Residue K563 forms a Glycyl lysine isopeptide (Lys-Gly) (interchain with G-Cter in SUMO2) linkage. The interaction with HDAC1 and ARID4B stretch occupies residues 687 to 829 (NPSIAVPIVL…IPDLLFAQRG (143 aa)). S832 and S860 each carry phosphoserine. Residues K865 and K875 each carry the N6-acetyllysine modification. Residues 888 to 967 (VNNNWYIFMR…YYPAFLDMVR (80 aa)) are interaction with OGT. Residues 903 to 932 (CLRLLRICSQAERQIEEENREREWEREVLG) are a coiled coil. A phosphoserine mark is found at S940, S1089, and S1112. The interval 1136–1156 (CQRGREQQEKEGKEGNSKKTM) is disordered. Over residues 1138-1156 (RGREQQEKEGKEGNSKKTM) the composition is skewed to basic and acidic residues.

Interacts with ARID4B, BRMS1L, HCFC1, HDAC1, HDAC2, MXI1, SAP30L, SAP130, SFPQ and TOPORS. Interacts with OGT (via TPRs 1-6); the interaction mediates transcriptional repression in parallel with histone deacetylase. Interacts with BAZ2A, MXD1, MXD3, MXD4, MBD2, DACH1, NCOR1, NR4A2, REST, RLIM, SAP30, SETDB1, SMYD2, and SUDS3. Interacts with PHF12 in a complex composed of HDAC1, PHF12 and SAP30. Interacts with TET1; the interaction recruits SIN3A to gene promoters. The large PER complex involved in the histone deacetylation is composed of at least HDAC1, PER2, SFPQ and SIN3A. Interacts with KLF11. Interacts with PPHLN1. Found in a complex with YY1, GON4L and HDAC1. Interacts (via PAH2) with FOXK1. Interacts with FOXK2. Found in a complex composed of at least SINHCAF, SIN3A, HDAC1, SAP30, RBBP4, OGT and TET1. Interacts with SINHCAF. Interacts with SPHK2. In terms of processing, SUMO1 sumoylated by TOPORS. Probably desumoylated by SENP2. Expressed in the developing brain, with highest levels of expression detected in the ventricular zone of various cortical regions.

It localises to the nucleus. Its subcellular location is the nucleolus. In terms of biological role, acts as a transcriptional repressor. Corepressor for REST. Interacts with MXI1 to repress MYC responsive genes and antagonize MYC oncogenic activities. Also interacts with MXD1-MAX heterodimers to repress transcription by tethering SIN3A to DNA. Acts cooperatively with OGT to repress transcription in parallel with histone deacetylation. Involved in the control of the circadian rhythms. Required for the transcriptional repression of circadian target genes, such as PER1, mediated by the large PER complex through histone deacetylation. Cooperates with FOXK1 to regulate cell cycle progression probably by repressing cell cycle inhibitor genes expression. Required for cortical neuron differentiation and callosal axon elongation. The polypeptide is Paired amphipathic helix protein Sin3a (Homo sapiens (Human)).